Here is a 433-residue protein sequence, read N- to C-terminus: Enolase (433 aa).

Residue Gln164 coordinates (2R)-2-phosphoglycerate. Glu206 functions as the Proton donor in the catalytic mechanism. The Mg(2+) site is built by Asp243, Glu289, and Asp316. 4 residues coordinate (2R)-2-phosphoglycerate: Lys341, Arg370, Ser371, and Lys392. Lys341 acts as the Proton acceptor in catalysis.

Belongs to the enolase family. The cofactor is Mg(2+).

The protein localises to the cytoplasm. The protein resides in the secreted. Its subcellular location is the cell surface. The enzyme catalyses (2R)-2-phosphoglycerate = phosphoenolpyruvate + H2O. It functions in the pathway carbohydrate degradation; glycolysis; pyruvate from D-glyceraldehyde 3-phosphate: step 4/5. Catalyzes the reversible conversion of 2-phosphoglycerate (2-PG) into phosphoenolpyruvate (PEP). It is essential for the degradation of carbohydrates via glycolysis. The chain is Enolase from Borrelia hermsii (strain HS1 / DAH).